We begin with the raw amino-acid sequence, 843 residues long: Protein P (843 aa).

Residues 1–177 (MPLSYQHFRK…FCGSPYSWEQ (177 aa)) are terminal protein domain (TP). The segment at 178 to 346 (ELQHGRLVFQ…YCLTHIVNLL (169 aa)) is spacer. 2 disordered regions span residues 220-273 (QSRL…SSTS) and 289-316 (LSTS…RSQS). The span at 289 to 299 (LSTSKRQSSSG) shows a compositional bias: polar residues. The tract at residues 347–690 (EDWGPCTEHG…YLNLYPVARQ (344 aa)) is polymerase/reverse transcriptase domain (RT). One can recognise a Reverse transcriptase domain in the interval 357-600 (EHNIRIPRTP…YSLNFMGYVI (244 aa)). Mg(2+)-binding residues include Asp429, Asp551, and Asp552.

It belongs to the hepadnaviridae P protein family.

The catalysed reaction is DNA(n) + a 2'-deoxyribonucleoside 5'-triphosphate = DNA(n+1) + diphosphate. The enzyme catalyses Endonucleolytic cleavage to 5'-phosphomonoester.. With respect to regulation, activated by host HSP70 and HSP40 in vitro to be able to bind the epsilon loop of the pgRNA. Because deletion of the RNase H region renders the protein partly chaperone-independent, the chaperones may be needed indirectly to relieve occlusion of the RNA-binding site by this domain. Inhibited by several reverse-transcriptase inhibitors: Lamivudine, Adefovir and Entecavir. Its function is as follows. Multifunctional enzyme that converts the viral RNA genome into dsDNA in viral cytoplasmic capsids. This enzyme displays a DNA polymerase activity that can copy either DNA or RNA templates, and a ribonuclease H (RNase H) activity that cleaves the RNA strand of RNA-DNA heteroduplexes in a partially processive 3'- to 5'-endonucleasic mode. Neo-synthesized pregenomic RNA (pgRNA) are encapsidated together with the P protein, and reverse-transcribed inside the nucleocapsid. Initiation of reverse-transcription occurs first by binding the epsilon loop on the pgRNA genome, and is initiated by protein priming, thereby the 5'-end of (-)DNA is covalently linked to P protein. Partial (+)DNA is synthesized from the (-)DNA template and generates the relaxed circular DNA (RC-DNA) genome. After budding and infection, the RC-DNA migrates in the nucleus, and is converted into a plasmid-like covalently closed circular DNA (cccDNA). The activity of P protein does not seem to be necessary for cccDNA generation, and is presumably released from (+)DNA by host nuclear DNA repair machinery. This Hepatitis B virus genotype C subtype ad (isolate Japan/S-179/1988) (HBV-C) protein is Protein P.